Reading from the N-terminus, the 242-residue chain is Transcriptional activator protein RaiR (242 aa).

Positions 177–242 (KVADLPRLSR…EQLLGPRRSN (66 aa)) constitute an HTH luxR-type domain. The segment at residues 201–220 (AKQICARLSISVSAVQLYLA) is a DNA-binding region (H-T-H motif).

Belongs to the autoinducer-regulated transcriptional regulatory protein family.

The chain is Transcriptional activator protein RaiR (raiR) from Rhizobium etli.